Here is a 258-residue protein sequence, read N- to C-terminus: L-aspartate dehydrogenase 1 (258 aa).

Positions 121 and 181 each coordinate NAD(+). The active site involves histidine 211.

Belongs to the L-aspartate dehydrogenase family.

It catalyses the reaction L-aspartate + NADP(+) + H2O = oxaloacetate + NH4(+) + NADPH + H(+). The catalysed reaction is L-aspartate + NAD(+) + H2O = oxaloacetate + NH4(+) + NADH + H(+). The protein operates within cofactor biosynthesis; NAD(+) biosynthesis; iminoaspartate from L-aspartate (dehydrogenase route): step 1/1. Specifically catalyzes the NAD or NADP-dependent dehydrogenation of L-aspartate to iminoaspartate. This is L-aspartate dehydrogenase 1 from Bordetella bronchiseptica (strain ATCC BAA-588 / NCTC 13252 / RB50) (Alcaligenes bronchisepticus).